A 428-amino-acid polypeptide reads, in one-letter code: Enolase (428 aa).

Gln-162 serves as a coordination point for (2R)-2-phosphoglycerate. The active-site Proton donor is the Glu-204. Residues Asp-241, Glu-288, and Asp-315 each contribute to the Mg(2+) site. (2R)-2-phosphoglycerate is bound by residues Lys-340, Arg-369, Ser-370, and Lys-391. Catalysis depends on Lys-340, which acts as the Proton acceptor.

Belongs to the enolase family. Mg(2+) serves as cofactor.

It localises to the cytoplasm. The protein resides in the secreted. The protein localises to the cell surface. It carries out the reaction (2R)-2-phosphoglycerate = phosphoenolpyruvate + H2O. It functions in the pathway carbohydrate degradation; glycolysis; pyruvate from D-glyceraldehyde 3-phosphate: step 4/5. Functionally, catalyzes the reversible conversion of 2-phosphoglycerate (2-PG) into phosphoenolpyruvate (PEP). It is essential for the degradation of carbohydrates via glycolysis. The sequence is that of Enolase from Azobacteroides pseudotrichonymphae genomovar. CFP2.